A 727-amino-acid polypeptide reads, in one-letter code: Long-chain-fatty-acid--[acyl-carrier-protein] ligase AEE15, chloroplastic (727 aa).

Residues 1-66 (MQIRLKPDYS…PSFRRFRVHC (66 aa)) constitute a chloroplast transit peptide.

It belongs to the ATP-dependent AMP-binding enzyme family.

Its subcellular location is the plastid. It is found in the chloroplast. It catalyses the reaction a long-chain fatty acid + holo-[ACP] + ATP = a long-chain fatty acyl-[ACP] + AMP + diphosphate. Its function is as follows. Probably involved in the activation of fatty acids to acyl-carrier-protein prior to fatty acid elongation in plastids. Acts on medium- to long-chain fatty acids. The protein is Long-chain-fatty-acid--[acyl-carrier-protein] ligase AEE15, chloroplastic (AAE15) of Arabidopsis thaliana (Mouse-ear cress).